We begin with the raw amino-acid sequence, 276 residues long: Diaminopimelate epimerase (276 aa).

Residues asparagine 13, glutamine 46, and asparagine 66 each contribute to the substrate site. The active-site Proton donor is the cysteine 75. Substrate is bound by residues 76–77 (GN), asparagine 159, asparagine 192, and 210–211 (ER). Cysteine 219 acts as the Proton acceptor in catalysis. Position 220-221 (220-221 (GT)) interacts with substrate.

It belongs to the diaminopimelate epimerase family. Homodimer.

It is found in the cytoplasm. It catalyses the reaction (2S,6S)-2,6-diaminopimelate = meso-2,6-diaminopimelate. Its pathway is amino-acid biosynthesis; L-lysine biosynthesis via DAP pathway; DL-2,6-diaminopimelate from LL-2,6-diaminopimelate: step 1/1. Catalyzes the stereoinversion of LL-2,6-diaminopimelate (L,L-DAP) to meso-diaminopimelate (meso-DAP), a precursor of L-lysine and an essential component of the bacterial peptidoglycan. In Ectopseudomonas mendocina (strain ymp) (Pseudomonas mendocina), this protein is Diaminopimelate epimerase.